A 483-amino-acid polypeptide reads, in one-letter code: 6-phosphogluconate dehydrogenase, decarboxylating (483 aa).

Residues Gly-10 to Gly-15 and Asn-33 to Thr-35 each bind NADP(+). Lys-38 is modified (N6-acetyllysine). Position 57 is a phosphoserine (Ser-57). NADP(+) is bound by residues Val-75–Ala-77 and Asn-103. The substrate site is built by Asn-103, Ser-129, and Gly-131. A Phosphoserine modification is found at Ser-129. Residue Lys-184 is the Proton acceptor of the active site. His-187–Asn-188 contacts substrate. Glu-191 serves as the catalytic Proton donor. 5 residues coordinate substrate: Tyr-192, Lys-261, Arg-288, Arg-447, and His-453. Ser-478–Tyr-481 is a binding site for NADP(+).

This sequence belongs to the 6-phosphogluconate dehydrogenase family. In terms of assembly, homodimer.

It localises to the cytoplasm. It carries out the reaction 6-phospho-D-gluconate + NADP(+) = D-ribulose 5-phosphate + CO2 + NADPH. It functions in the pathway carbohydrate degradation; pentose phosphate pathway; D-ribulose 5-phosphate from D-glucose 6-phosphate (oxidative stage): step 3/3. Catalyzes the oxidative decarboxylation of 6-phosphogluconate to ribulose 5-phosphate and CO(2), with concomitant reduction of NADP to NADPH. This chain is 6-phosphogluconate dehydrogenase, decarboxylating (PGD), found in Ovis aries (Sheep).